Consider the following 169-residue polypeptide: Putative phosphoesterase SH1944 (169 aa).

H34 acts as the Proton donor in catalysis. 2 short sequence motifs (HXTX) span residues 34–37 and 115–118; these read HITI and HFTI. H115 (proton acceptor) is an active-site residue.

It belongs to the 2H phosphoesterase superfamily. YjcG family.

This is Putative phosphoesterase SH1944 from Staphylococcus haemolyticus (strain JCSC1435).